A 201-amino-acid polypeptide reads, in one-letter code: Achaete-scute complex protein T5 (201 aa).

Over residues 1–10 the composition is skewed to polar residues; the sequence is MALGSENHSV. A disordered region spans residues 1–32; it reads MALGSENHSVFNDDEESSSAFNGPSVIRRNAR. The bHLH domain maps to 24–90; that stretch reads PSVIRRNARE…KMAVEYIRRL (67 aa).

In terms of assembly, efficient DNA binding requires dimerization with another bHLH protein. L(1)SC, SC and AC strongly label the presumptive stomatogastric nervous system, while ASE is more prominent in the presumptive procephalic lobe.

In terms of biological role, AS-C proteins are involved in the determination of the neuronal precursors in the peripheral nervous system and the central nervous system. This is Achaete-scute complex protein T5 (ac) from Drosophila melanogaster (Fruit fly).